The chain runs to 323 residues: HPr kinase/phosphorylase (323 aa).

Active-site residues include H146 and K167. 161-168 (GESGLGKS) contributes to the ATP binding site. Position 168 (S168) interacts with Mg(2+). Catalysis depends on D185, which acts as the Proton acceptor; for phosphorylation activity. Proton donor; for dephosphorylation activity. The important for the catalytic mechanism of both phosphorylation and dephosphorylation stretch occupies residues 209 to 218 (LEVRGLGLLD). Position 210 (E210) interacts with Mg(2+). R250 is a catalytic residue. The tract at residues 271 to 276 (QVAAGR) is important for the catalytic mechanism of dephosphorylation.

It belongs to the HPrK/P family. In terms of assembly, homohexamer. Mg(2+) is required as a cofactor.

The enzyme catalyses [HPr protein]-L-serine + ATP = [HPr protein]-O-phospho-L-serine + ADP + H(+). It catalyses the reaction [HPr protein]-O-phospho-L-serine + phosphate + H(+) = [HPr protein]-L-serine + diphosphate. Its function is as follows. Catalyzes the ATP- as well as the pyrophosphate-dependent phosphorylation of a specific serine residue in HPr, a phosphocarrier protein of the phosphoenolpyruvate-dependent sugar phosphotransferase system (PTS). HprK/P also catalyzes the pyrophosphate-producing, inorganic phosphate-dependent dephosphorylation (phosphorolysis) of seryl-phosphorylated HPr (P-Ser-HPr). The protein is HPr kinase/phosphorylase of Cupriavidus pinatubonensis (strain JMP 134 / LMG 1197) (Cupriavidus necator (strain JMP 134)).